The primary structure comprises 364 residues: Melatonin receptor type 1B (364 aa).

At 1–42 (MPENSSIPNCCEASGLAARPSWSGSAGARPPVTARAPWVAPM) the chain is on the extracellular side. Asparagine 4 carries N-linked (GlcNAc...) asparagine glycosylation. The helical transmembrane segment at 43–63 (LSTVVVVTTAVDFVGNLLVIL) threads the bilayer. The Cytoplasmic segment spans residues 64-76 (SVLRNRKLRNAGN). A helical transmembrane segment spans residues 77–97 (LFVVSLALADLVIALYPYPLI). The Extracellular segment spans residues 98 to 115 (LVAIIRDGWVLGEAHCKA). Cysteines 113 and 190 form a disulfide. The chain crosses the membrane as a helical span at residues 116–136 (SAFVMGLSVIGSVFNITAIAI). At 137 to 155 (NRYCCICHSTTYHRVCSHW) the chain is on the cytoplasmic side. A helical transmembrane segment spans residues 156–176 (YTPIYISLVWLLTLVALVPNF). Residues 177-200 (FVGSLEYDPRIYSCTFIQTASTQY) lie on the Extracellular side of the membrane. Residues 201–221 (TAAVVAIHFLLPMAVVSFCYL) traverse the membrane as a helical segment. Topologically, residues 222–253 (RIWVLVLQARRKAKATRKLRLRPSDLRSFLTM) are cytoplasmic. The helical transmembrane segment at 254–274 (FAVFVVFAICWAPLNCIGLAV) threads the bilayer. Residues 275–287 (AINPEAMALQVPE) lie on the Extracellular side of the membrane. A helical transmembrane segment spans residues 288 to 308 (GLFVTSYFLAYFNSCLNAIVY). Topologically, residues 309-364 (GLLNQNFRREYKRILLAIWNTRRCIQHASKHCLTEERQGPTPPAARATVPVKEGAL) are cytoplasmic. The interval 343–364 (EERQGPTPPAARATVPVKEGAL) is disordered. A compositionally biased stretch (low complexity) spans 352 to 364 (AARATVPVKEGAL).

It belongs to the G-protein coupled receptor 1 family.

The protein localises to the cell membrane. Its function is as follows. High affinity receptor for melatonin. The activity of this receptor is mediated by pertussis toxin sensitive G proteins that inhibits adenylate cyclase activity. The protein is Melatonin receptor type 1B (Mtnr1b) of Mus musculus (Mouse).